Here is a 396-residue protein sequence, read N- to C-terminus: L-lactate dehydrogenase (396 aa).

The region spanning 1–380 (MIISAASDYR…SGDSLVQELG (380 aa)) is the FMN hydroxy acid dehydrogenase domain. Tyr-24 contacts substrate. Positions 106 and 127 each coordinate FMN. A substrate-binding site is contributed by Tyr-129. Thr-155 serves as a coordination point for FMN. Arg-164 provides a ligand contact to substrate. Lys-251 is an FMN binding site. His-275 (proton acceptor) is an active-site residue. Arg-278 contributes to the substrate binding site. An FMN-binding site is contributed by 306-330 (DSGIRNGLDVVRMIALGADTVLLGR).

This sequence belongs to the FMN-dependent alpha-hydroxy acid dehydrogenase family. FMN is required as a cofactor.

The protein localises to the cell inner membrane. It carries out the reaction (S)-lactate + A = pyruvate + AH2. In terms of biological role, catalyzes the conversion of L-lactate to pyruvate. Is coupled to the respiratory chain. This chain is L-lactate dehydrogenase, found in Salmonella schwarzengrund (strain CVM19633).